The following is a 114-amino-acid chain: UPF0339 protein plu2779 (114 aa).

Repeat copies occupy residues 11-59 and 62-110.

The protein belongs to the UPF0339 family. Duplicated subfamily.

The chain is UPF0339 protein plu2779 from Photorhabdus laumondii subsp. laumondii (strain DSM 15139 / CIP 105565 / TT01) (Photorhabdus luminescens subsp. laumondii).